The primary structure comprises 582 residues: PX domain-containing protein kinase-like protein (582 aa).

The PX domain occupies 14-126; it reads LDDTVPLTAA…KFLDPNNYSA (113 aa). One can recognise a Protein kinase domain in the interval 88 to 481; it reads FIAERQRGLQ…VENSEEQPVK (394 aa). A disordered region spans residues 433–550; sequence EQKQIHQHRR…APFLPQPVNG (118 aa). 2 stretches are compositionally biased toward basic residues: residues 437-448 and 457-469; these read IHQHRRLTRAQS and KRRK…KSKR. Residues 483–514 show a composition bias toward low complexity; that stretch reads SNSNNSAGSGASSPLTSPSSPTPPSTAGLSSA. Residues 515–531 are compositionally biased toward pro residues; the sequence is LPPPPPPPPPPPPPAGP. Residues 548-567 enclose the WH2 domain; that stretch reads VNGVNRGALLSSIQNFQKGT.

The protein belongs to the protein kinase superfamily. As to expression, isoform 1 is present in all tissues examined. Isoform 2 is found in all tissues except skeletal muscle and very low levels in spleen. Both isoforms are widely expressed throughout the nervous system however levels of isoform 2 are higher in purified hippocampal and cortical neurons whereas glial cells express more isoform 1 than isoform 2.

It localises to the cytoplasm. The protein localises to the cell membrane. Binds to and modulates brain Na,K-ATPase subunits ATP1B1 and ATP1B3 and may thereby participate in the regulation of electrical excitability and synaptic transmission. May not display kinase activity. The protein is PX domain-containing protein kinase-like protein of Mus musculus (Mouse).